The following is a 185-amino-acid chain: MQDKEFKIAIIGPENAGKSSIMNALFGKYVSLVSEVGGTTKMPIKRYWGKLKIGRIKEEPEFVNLVFVDLGGLYTTTDKQSPIMTPKVLEKTFEEINDSDMIIHVIDGSVGLLRSFERLHHLLKFRYQKPIIVVINKCDLLNDSDKEHLKNYVERRIKNTPIFVSAKTFEGIPELLDIIIKYLKR.

The G domain maps to 17–137; sequence GKSSIMNALF…QKPIIVVINK (121 aa).

This is an uncharacterized protein from Methanocaldococcus jannaschii (strain ATCC 43067 / DSM 2661 / JAL-1 / JCM 10045 / NBRC 100440) (Methanococcus jannaschii).